The sequence spans 149 residues: Ribonuclease pancreatic (149 aa).

The N-terminal stretch at 1–25 is a signal peptide; that stretch reads MGLEKSLILFPLFFLLLGWVQPSLG. The substrate site is built by lysine 32 and arginine 35. The active-site Proton acceptor is histidine 37. Cystine bridges form between cysteine 51–cysteine 109, cysteine 65–cysteine 120, cysteine 83–cysteine 135, and cysteine 90–cysteine 97. Substrate is bound by residues 66–70 and lysine 91; that span reads KPVNT. Histidine 144 functions as the Proton donor in the catalytic mechanism.

Belongs to the pancreatic ribonuclease family. In terms of assembly, monomer. Interacts with and forms tight 1:1 complexes with RNH1. Dimerization of two such complexes may occur. Interaction with RNH1 inhibits this protein. Pancreas.

Its subcellular location is the secreted. It catalyses the reaction an [RNA] containing cytidine + H2O = an [RNA]-3'-cytidine-3'-phosphate + a 5'-hydroxy-ribonucleotide-3'-[RNA].. It carries out the reaction an [RNA] containing uridine + H2O = an [RNA]-3'-uridine-3'-phosphate + a 5'-hydroxy-ribonucleotide-3'-[RNA].. Functionally, endonuclease that catalyzes the cleavage of RNA on the 3' side of pyrimidine nucleotides. Acts on single-stranded and double-stranded RNA. This is Ribonuclease pancreatic (Rnase1) from Mus musculus (Mouse).